The sequence spans 107 residues: Phosphoribosyl-ATP pyrophosphatase (107 aa).

It belongs to the PRA-PH family.

It is found in the cytoplasm. It catalyses the reaction 1-(5-phospho-beta-D-ribosyl)-ATP + H2O = 1-(5-phospho-beta-D-ribosyl)-5'-AMP + diphosphate + H(+). The protein operates within amino-acid biosynthesis; L-histidine biosynthesis; L-histidine from 5-phospho-alpha-D-ribose 1-diphosphate: step 2/9. This Clostridium tetani (strain Massachusetts / E88) protein is Phosphoribosyl-ATP pyrophosphatase (hisE).